The following is a 436-amino-acid chain: MANPVVAIVGRPNVGKSTIFNRIVGERISIVEDVPGVTRDRIYSRAEWLNHSFYLIDTGGIDIGDEPLLVQIRQQAEIAIDEADVIIFMTNGRDGVTAADEEVAKLLRRSNKPVVLAVNKIDNPEMRDLIYDFYALGFGEPYPISGAHGTGLGDLLDAVVRHFPKGGGQEYEEDVIKFCLIGRPNVGKSSLVNAILGEERVIVSDIAGTTRDAVDTSFVREGQEYVIIDTAGMRKRGKIYESTEKYSVLRALRAIERSDVVLVVLNAEEGIIEQDKKIAGYAHEAGRGVILIVNKWDAIEKDDKTMVEFERKIRDHFPFLDYAPILFVSAKTKQRLHKLLPLVRLVSDNHAMRVQTNVLNEVIMDAVAMNPTPTHNGRRLKVYYMTQVAVKPPTFVAFVNDPELMHFSYERFLENRIRDAFGFEGTPIKIIARPRK.

EngA-type G domains are found at residues 4–167 and 176–351; these read PVVA…PKGG and IKFC…DNHA. GTP-binding positions include 10 to 17, 57 to 61, 119 to 122, 182 to 189, 229 to 233, and 294 to 297; these read GRPNVGKS, DTGGI, NKID, DTAGM, and NKWD. In terms of domain architecture, KH-like spans 352–436; it reads MRVQTNVLNE…PIKIIARPRK (85 aa).

It belongs to the TRAFAC class TrmE-Era-EngA-EngB-Septin-like GTPase superfamily. EngA (Der) GTPase family. As to quaternary structure, associates with the 50S ribosomal subunit.

In terms of biological role, GTPase that plays an essential role in the late steps of ribosome biogenesis. The polypeptide is GTPase Der (Geobacillus kaustophilus (strain HTA426)).